The sequence spans 519 residues: NADH-quinone oxidoreductase subunit N (519 aa).

Transmembrane regions (helical) follow at residues 22 to 42, 53 to 73, 87 to 107, 141 to 161, 163 to 183, 198 to 218, 242 to 262, 287 to 307, 310 to 330, 336 to 356, 363 to 383, 406 to 426, 442 to 461, and 483 to 503; these read LLPM…EAFV, VLAL…TGLP, PTLF…LLIA, TEVF…PAAN, LITA…LAGM, YFLL…LVYG, IIVG…GVPF, VAAF…LAWD, PVIW…GITQ, LLAY…AATT, VLFY…IVIL, LVAG…PTSG, AGPL…YYYL, and GALA…LGIV.

This sequence belongs to the complex I subunit 2 family. In terms of assembly, NDH-1 is composed of 14 different subunits. Subunits NuoA, H, J, K, L, M, N constitute the membrane sector of the complex.

The protein localises to the cell membrane. It carries out the reaction a quinone + NADH + 5 H(+)(in) = a quinol + NAD(+) + 4 H(+)(out). Functionally, NDH-1 shuttles electrons from NADH, via FMN and iron-sulfur (Fe-S) centers, to quinones in the respiratory chain. The immediate electron acceptor for the enzyme in this species is believed to be a menaquinone. Couples the redox reaction to proton translocation (for every two electrons transferred, four hydrogen ions are translocated across the cytoplasmic membrane), and thus conserves the redox energy in a proton gradient. The polypeptide is NADH-quinone oxidoreductase subunit N (Acidothermus cellulolyticus (strain ATCC 43068 / DSM 8971 / 11B)).